Reading from the N-terminus, the 376-residue chain is Queuine tRNA-ribosyltransferase (376 aa).

Residue Asp93 is the Proton acceptor of the active site. Residues 93–97 (DSGGF), Asp147, Gln190, and Gly217 each bind substrate. Residues 248–254 (GVGTPDD) form an RNA binding region. Asp267 serves as the catalytic Nucleophile. An RNA binding; important for wobble base 34 recognition region spans residues 272-276 (TRSGR).

Belongs to the queuine tRNA-ribosyltransferase family. Homodimer. Within each dimer, one monomer is responsible for RNA recognition and catalysis, while the other monomer binds to the replacement base PreQ1.

The catalysed reaction is 7-aminomethyl-7-carbaguanine + guanosine(34) in tRNA = 7-aminomethyl-7-carbaguanosine(34) in tRNA + guanine. Its pathway is tRNA modification; tRNA-queuosine biosynthesis. Its function is as follows. Catalyzes the base-exchange of a guanine (G) residue with the queuine precursor 7-aminomethyl-7-deazaguanine (PreQ1) at position 34 (anticodon wobble position) in tRNAs with GU(N) anticodons (tRNA-Asp, -Asn, -His and -Tyr). Catalysis occurs through a double-displacement mechanism. The nucleophile active site attacks the C1' of nucleotide 34 to detach the guanine base from the RNA, forming a covalent enzyme-RNA intermediate. The proton acceptor active site deprotonates the incoming PreQ1, allowing a nucleophilic attack on the C1' of the ribose to form the product. After dissociation, two additional enzymatic reactions on the tRNA convert PreQ1 to queuine (Q), resulting in the hypermodified nucleoside queuosine (7-(((4,5-cis-dihydroxy-2-cyclopenten-1-yl)amino)methyl)-7-deazaguanosine). The polypeptide is Queuine tRNA-ribosyltransferase (Agrobacterium fabrum (strain C58 / ATCC 33970) (Agrobacterium tumefaciens (strain C58))).